The sequence spans 702 residues: MSMRGSGKLWLVMADGQEDPAVFTSTCLPSDSRLLATVTNAYLGTRVYRNILHVSGVYNGAAGDTHRADIPSPVNVRMTVPDGDVPVETFTLNTRTGTFSHKLESSSYTATHQIYAHHSLVHLMAFSITIWRSAGTSQPITVQLQAPFVPKSQDLDLQQGPDFQGAHYIYGQTLVPEVEGGPQPTVHMLWTPVPQAVTLHEEEQERRWEFLTAVAESEEEAKRSYSEGLARMAAGSLHSSHTRAWAALWRGCCVDLEGPLPLRQALYGCLYYLLSAIPPQGTPGFHFHGISPGGLSNGTRGEDYWGHVFWDQDTWIFPNILLFYPEAARAILEYRIRTLEGALLNAQEQGYKGAKFPWESAATGREVCPEDIYGAQEIHITGDVLMAFEQYYHTTQDQKLFRTDGGWELVSAVAQYWCSRMVWSEEEQCYHIRGVMPPDEYHYQVDNSAYTNAVAQRSLNFAASVARDFFIPVPEEWVECAKKVKVPFDAVRKYHPEYDGYSPGEPVKQADVVLLGFPLMHPMHPEVRRNDLVMYEPVTELSGPAMTWSMFAVGWLELKETQRAQGLLNKCFSNITEPFKIWVENSDGSGAVNFLTGMGGFLQAVLFGYTGFRITKTNLRFDPAFPSDVSKLEVTGVSYLGSKLKFSITKEKMRIAVTKCPLHPPLEAVLEESGQRFPLHEGQSISFPTAAGCIQKAPSEGL.

Residue 310–311 (WD) participates in substrate binding. The active-site Proton donor is glutamate 440. Residue 508 to 509 (KQ) coordinates substrate.

It belongs to the glycosyl hydrolase 65 family.

It carries out the reaction (5R)-5-O-[alpha-D-glucosyl-(1-&gt;2)-beta-D-galactosyl]-5-hydroxy-L-lysyl-[collagen] + H2O = (5R)-5-O-(beta-D-galactosyl)-5-hydroxy-L-lysyl-[collagen] + D-glucose. In terms of biological role, catalyzes the hydrolysis of glucose from the disaccharide unit linked to hydroxylysine residues of collagen and collagen-like proteins. The chain is Protein-glucosylgalactosylhydroxylysine glucosidase from Gallus gallus (Chicken).